The sequence spans 697 residues: Potassium-transporting ATPase ATP-binding subunit (697 aa).

4 helical membrane passes run 55–75 (PIMFVVEIGFIITFILSFLPS), 79–99 (SIPGWFNITVSLILLFTVLFA), 245–265 (LTLIFLIVVVTLPIFTNYLGF), and 271–291 (VLVALLVCLIPTTIGGLLSAI). Aspartate 324 serves as the catalytic 4-aspartylphosphate intermediate. ATP-binding positions include aspartate 361, glutamate 365, 393–400 (FKAETRMS), and lysine 412. The Mg(2+) site is built by aspartate 535 and aspartate 539. 3 helical membrane passes run 605–625 (FAIIPAMFTLAIPQMEALNIM), 633–653 (AILSALLFNAVIIPLLIPLAM), and 677–697 (GGVIVPFIGIKVIDIIVGLFI).

Belongs to the cation transport ATPase (P-type) (TC 3.A.3) family. Type IA subfamily. As to quaternary structure, the system is composed of three essential subunits: KdpA, KdpB and KdpC.

The protein resides in the cell membrane. The catalysed reaction is K(+)(out) + ATP + H2O = K(+)(in) + ADP + phosphate + H(+). In terms of biological role, part of the high-affinity ATP-driven potassium transport (or Kdp) system, which catalyzes the hydrolysis of ATP coupled with the electrogenic transport of potassium into the cytoplasm. This subunit is responsible for energy coupling to the transport system and for the release of the potassium ions to the cytoplasm. The protein is Potassium-transporting ATPase ATP-binding subunit of Bacillus cereus (strain ZK / E33L).